A 278-amino-acid chain; its full sequence is Undecaprenyl-diphosphatase (278 aa).

The next 8 membrane-spanning stretches (helical) occupy residues 3 to 23 (YILIGVILGIVQGISEWIPIS), 42 to 62 (VAYSFGLFMEIGTIAAAIFYF), 88 to 108 (FLVIVTIITGLVGVPLYLFVI), 112 to 132 (ILGLPMTVLGVVLLIDGIVIY), 152 to 172 (IIIVGIAQGLAALPGVSRSGM), 190 to 210 (LSFISLIPAALGAISVTVLFS), 225 to 245 (GLLISIVVATFVSIFFINALL), and 253 to 273 (VVLLVIILGIMAIISGILSDI).

This sequence belongs to the UppP family.

It is found in the cell membrane. It carries out the reaction di-trans,octa-cis-undecaprenyl diphosphate + H2O = di-trans,octa-cis-undecaprenyl phosphate + phosphate + H(+). In terms of biological role, catalyzes the dephosphorylation of undecaprenyl diphosphate (UPP). The polypeptide is Undecaprenyl-diphosphatase (Saccharolobus solfataricus (strain ATCC 35092 / DSM 1617 / JCM 11322 / P2) (Sulfolobus solfataricus)).